A 505-amino-acid chain; its full sequence is Maturase K (505 aa).

The protein belongs to the intron maturase 2 family. MatK subfamily.

The protein resides in the plastid. The protein localises to the chloroplast. Functionally, usually encoded in the trnK tRNA gene intron. Probably assists in splicing its own and other chloroplast group II introns. In Kunzea ericoides (White teatree), this protein is Maturase K.